A 276-amino-acid chain; its full sequence is Acyl-[acyl-carrier-protein]--UDP-N-acetylglucosamine O-acyltransferase (276 aa).

Belongs to the transferase hexapeptide repeat family. LpxA subfamily. As to quaternary structure, homotrimer.

Its subcellular location is the cytoplasm. It catalyses the reaction a (3R)-hydroxyacyl-[ACP] + UDP-N-acetyl-alpha-D-glucosamine = a UDP-3-O-[(3R)-3-hydroxyacyl]-N-acetyl-alpha-D-glucosamine + holo-[ACP]. It participates in glycolipid biosynthesis; lipid IV(A) biosynthesis; lipid IV(A) from (3R)-3-hydroxytetradecanoyl-[acyl-carrier-protein] and UDP-N-acetyl-alpha-D-glucosamine: step 1/6. In terms of biological role, involved in the biosynthesis of lipid A, a phosphorylated glycolipid that anchors the lipopolysaccharide to the outer membrane of the cell. This chain is Acyl-[acyl-carrier-protein]--UDP-N-acetylglucosamine O-acyltransferase, found in Rippkaea orientalis (strain PCC 8801 / RF-1) (Cyanothece sp. (strain PCC 8801)).